A 654-amino-acid chain; its full sequence is Cytochrome B pre-mRNA-processing protein 1 (654 aa).

It localises to the mitochondrion. Responsible for conferring a stable 5'-end on cytochrome b mRNA. The protein is Cytochrome B pre-mRNA-processing protein 1 (CBP1) of Saccharomyces cerevisiae (strain ATCC 204508 / S288c) (Baker's yeast).